Here is a 122-residue protein sequence, read N- to C-terminus: Seminal vesicle secretory protein 5 (122 aa).

Positions 1–21 (MSPTSFFLLTLLLVLVTEARG) are cleaved as a signal peptide. The interval 23–122 (RERFSQSAED…KTRVKSRILK (100 aa)) is disordered. Residues 27 to 37 (SQSAEDPSSSH) are compositionally biased toward polar residues.

Belongs to the SVP2/SVP5/SVP6 family. In terms of tissue distribution, testis.

The protein localises to the secreted. The protein resides in the extracellular space. The sequence is that of Seminal vesicle secretory protein 5 (Svs5) from Mus musculus (Mouse).